A 296-amino-acid chain; its full sequence is Lipoyl synthase (296 aa).

[4Fe-4S] cluster-binding residues include Cys-37, Cys-42, Cys-48, Cys-63, Cys-67, Cys-70, and Ser-276. Residues Trp-49–Leu-265 enclose the Radical SAM core domain.

Belongs to the radical SAM superfamily. Lipoyl synthase family. [4Fe-4S] cluster is required as a cofactor.

Its subcellular location is the cytoplasm. It catalyses the reaction [[Fe-S] cluster scaffold protein carrying a second [4Fe-4S](2+) cluster] + N(6)-octanoyl-L-lysyl-[protein] + 2 oxidized [2Fe-2S]-[ferredoxin] + 2 S-adenosyl-L-methionine + 4 H(+) = [[Fe-S] cluster scaffold protein] + N(6)-[(R)-dihydrolipoyl]-L-lysyl-[protein] + 4 Fe(3+) + 2 hydrogen sulfide + 2 5'-deoxyadenosine + 2 L-methionine + 2 reduced [2Fe-2S]-[ferredoxin]. Its pathway is protein modification; protein lipoylation via endogenous pathway; protein N(6)-(lipoyl)lysine from octanoyl-[acyl-carrier-protein]: step 2/2. In terms of biological role, catalyzes the radical-mediated insertion of two sulfur atoms into the C-6 and C-8 positions of the octanoyl moiety bound to the lipoyl domains of lipoate-dependent enzymes, thereby converting the octanoylated domains into lipoylated derivatives. This chain is Lipoyl synthase, found in Rickettsia peacockii (strain Rustic).